The following is a 296-amino-acid chain: MNDYLVKSIDKTKNLRLLTITAKGVVSEAQKRHDLWSASSAVLGRTLVGSLLLAGAELTDKEELTVRLLGNGPVGPAIVTATADLKVKGYVKNPHIALPPKENGHIDVKKAVGQGWFEVTKDLGLKEPYTGQVPIVSGEIAEDFAYYLTKSEQIPSAVGLSVFVNPNNSIGEAGGFMLQALPGASDALIDKTIKRINELPALSTSFLDGMTPEDLARKILGTDCKILEKDDVAFSCDCSKEKYAGILETLKSSQLKDMINEDHGAELICNFCGNKYHYTEDELKEILAKKKDDKDY.

Intrachain disulfides connect Cys-236-Cys-238 and Cys-269-Cys-272.

Belongs to the HSP33 family. Post-translationally, under oxidizing conditions two disulfide bonds are formed involving the reactive cysteines. Under reducing conditions zinc is bound to the reactive cysteines and the protein is inactive.

It is found in the cytoplasm. Redox regulated molecular chaperone. Protects both thermally unfolding and oxidatively damaged proteins from irreversible aggregation. Plays an important role in the bacterial defense system toward oxidative stress. The protein is 33 kDa chaperonin of Lactobacillus acidophilus (strain ATCC 700396 / NCK56 / N2 / NCFM).